Consider the following 668-residue polypeptide: tRNA 5-methylaminomethyl-2-thiouridine biosynthesis bifunctional protein MnmC (668 aa).

The segment at 1–245 (MKHYSIQPAN…KREMLCGVME (245 aa)) is tRNA (mnm(5)s(2)U34)-methyltransferase. Positions 270–668 (IGGGIASALL…LLKGKAVKAG (399 aa)) are FAD-dependent cmnm(5)s(2)U34 oxidoreductase.

In the N-terminal section; belongs to the methyltransferase superfamily. tRNA (mnm(5)s(2)U34)-methyltransferase family. The protein in the C-terminal section; belongs to the DAO family. Requires FAD as cofactor.

It is found in the cytoplasm. The enzyme catalyses 5-aminomethyl-2-thiouridine(34) in tRNA + S-adenosyl-L-methionine = 5-methylaminomethyl-2-thiouridine(34) in tRNA + S-adenosyl-L-homocysteine + H(+). In terms of biological role, catalyzes the last two steps in the biosynthesis of 5-methylaminomethyl-2-thiouridine (mnm(5)s(2)U) at the wobble position (U34) in tRNA. Catalyzes the FAD-dependent demodification of cmnm(5)s(2)U34 to nm(5)s(2)U34, followed by the transfer of a methyl group from S-adenosyl-L-methionine to nm(5)s(2)U34, to form mnm(5)s(2)U34. In Escherichia coli O6:H1 (strain CFT073 / ATCC 700928 / UPEC), this protein is tRNA 5-methylaminomethyl-2-thiouridine biosynthesis bifunctional protein MnmC.